We begin with the raw amino-acid sequence, 297 residues long: 4-diphosphocytidyl-2-C-methyl-D-erythritol kinase (297 aa).

Catalysis depends on residues K6 and D144.

Belongs to the GHMP kinase family. IspE subfamily.

It catalyses the reaction 4-CDP-2-C-methyl-D-erythritol + ATP = 4-CDP-2-C-methyl-D-erythritol 2-phosphate + ADP + H(+). It functions in the pathway isoprenoid biosynthesis; isopentenyl diphosphate biosynthesis via DXP pathway; isopentenyl diphosphate from 1-deoxy-D-xylulose 5-phosphate: step 3/6. In terms of biological role, catalyzes the phosphorylation of the position 2 hydroxy group of 4-diphosphocytidyl-2C-methyl-D-erythritol. This is 4-diphosphocytidyl-2-C-methyl-D-erythritol kinase from Leptospira interrogans serogroup Icterohaemorrhagiae serovar copenhageni (strain Fiocruz L1-130).